A 442-amino-acid polypeptide reads, in one-letter code: Probable carboxypeptidase PADG_04062 (442 aa).

Positions Met-1 to Ala-20 are cleaved as a signal peptide. N-linked (GlcNAc...) asparagine glycosylation is present at Asn-102. Asp-160 provides a ligand contact to Zn(2+). The Proton acceptor role is filled by Glu-192. Residue Glu-193 participates in Zn(2+) binding. Asn-343 carries N-linked (GlcNAc...) asparagine glycosylation.

The protein belongs to the peptidase M20A family. The cofactor is Zn(2+).

The protein resides in the secreted. The polypeptide is Probable carboxypeptidase PADG_04062 (Paracoccidioides brasiliensis (strain Pb18)).